Consider the following 243-residue polypeptide: MTQTHFGYQTVDEQEKAKKVAGVFHSVASNYDLMNDLMSGGLHRAWKAFTIAQANVRPGYKVLDIAGGTGDLSKAFAKRAGETGEVWHTDINESMLRVGRDRLIDKGVITPTLLCDAEKIPFPDNYFDVVTVAFGLRNMTHKDAALAEMRRVLKPAGRLLVLEFSKVWDPLKKAYDVYSFKVLPWLGDRFAKDADSYRYLAESIRMHPDQETLKTMMEQAGLDAVKYYNLSAGVVALHVGTKY.

Residues threonine 69, aspartate 90, and 116–117 (DA) each bind S-adenosyl-L-methionine.

Belongs to the class I-like SAM-binding methyltransferase superfamily. MenG/UbiE family.

It catalyses the reaction a 2-demethylmenaquinol + S-adenosyl-L-methionine = a menaquinol + S-adenosyl-L-homocysteine + H(+). The catalysed reaction is a 2-methoxy-6-(all-trans-polyprenyl)benzene-1,4-diol + S-adenosyl-L-methionine = a 5-methoxy-2-methyl-3-(all-trans-polyprenyl)benzene-1,4-diol + S-adenosyl-L-homocysteine + H(+). The protein operates within quinol/quinone metabolism; menaquinone biosynthesis; menaquinol from 1,4-dihydroxy-2-naphthoate: step 2/2. Its pathway is cofactor biosynthesis; ubiquinone biosynthesis. In terms of biological role, methyltransferase required for the conversion of demethylmenaquinol (DMKH2) to menaquinol (MKH2) and the conversion of 2-polyprenyl-6-methoxy-1,4-benzoquinol (DDMQH2) to 2-polyprenyl-3-methyl-6-methoxy-1,4-benzoquinol (DMQH2). The protein is Ubiquinone/menaquinone biosynthesis C-methyltransferase UbiE of Paraburkholderia phymatum (strain DSM 17167 / CIP 108236 / LMG 21445 / STM815) (Burkholderia phymatum).